The following is a 212-amino-acid chain: Large ribosomal subunit protein uL3 (212 aa).

The residue at position 153 (Gln153) is an N5-methylglutamine.

This sequence belongs to the universal ribosomal protein uL3 family. In terms of assembly, part of the 50S ribosomal subunit. Forms a cluster with proteins L14 and L19. Methylated by PrmB.

In terms of biological role, one of the primary rRNA binding proteins, it binds directly near the 3'-end of the 23S rRNA, where it nucleates assembly of the 50S subunit. In Shewanella woodyi (strain ATCC 51908 / MS32), this protein is Large ribosomal subunit protein uL3.